The sequence spans 89 residues: Small ribosomal subunit protein eS25A (89 aa).

It belongs to the eukaryotic ribosomal protein eS25 family. Component of the small ribosomal subunit (SSU). Mature yeast ribosomes consist of a small (40S) and a large (60S) subunit. The 40S small subunit contains 1 molecule of ribosomal RNA (18S rRNA) and at least 33 different proteins. The large 60S subunit contains 3 rRNA molecules (25S, 5.8S and 5S rRNA) and at least 46 different proteins.

Its subcellular location is the cytoplasm. Functionally, component of the ribosome, a large ribonucleoprotein complex responsible for the synthesis of proteins in the cell. The small ribosomal subunit (SSU) binds messenger RNAs (mRNAs) and translates the encoded message by selecting cognate aminoacyl-transfer RNA (tRNA) molecules. The large subunit (LSU) contains the ribosomal catalytic site termed the peptidyl transferase center (PTC), which catalyzes the formation of peptide bonds, thereby polymerizing the amino acids delivered by tRNAs into a polypeptide chain. The nascent polypeptides leave the ribosome through a tunnel in the LSU and interact with protein factors that function in enzymatic processing, targeting, and the membrane insertion of nascent chains at the exit of the ribosomal tunnel. In Schizosaccharomyces pombe (strain 972 / ATCC 24843) (Fission yeast), this protein is Small ribosomal subunit protein eS25A (rps2502).